The chain runs to 269 residues: Phosphate import ATP-binding protein PstB (269 aa).

The ABC transporter domain maps to 22 to 264; the sequence is AEVRDLNFYY…PVQQKTADYV (243 aa). 54 to 61 is a binding site for ATP; the sequence is GPSGCGKT.

It belongs to the ABC transporter superfamily. Phosphate importer (TC 3.A.1.7) family. The complex is composed of two ATP-binding proteins (PstB), two transmembrane proteins (PstC and PstA) and a solute-binding protein (PstS).

It is found in the cell inner membrane. It carries out the reaction phosphate(out) + ATP + H2O = ADP + 2 phosphate(in) + H(+). Part of the ABC transporter complex PstSACB involved in phosphate import. Responsible for energy coupling to the transport system. The polypeptide is Phosphate import ATP-binding protein PstB (Thermosynechococcus vestitus (strain NIES-2133 / IAM M-273 / BP-1)).